A 416-amino-acid chain; its full sequence is Choline/ethanolaminephosphotransferase 1 (416 aa).

The interval 1-20 is disordered; the sequence is MSGHRSTRKRCGDSHPESPV. Ser-18 carries the post-translational modification Phosphoserine. Thr-40 carries the post-translational modification Phosphothreonine. Asn-86 provides a ligand contact to CDP-choline. The next 2 membrane-spanning stretches (helical) occupy residues 89-108 and 116-133; these read TIIG…FYCP and LWAY…QSLD. A Mg(2+)-binding site is contributed by Asp-133. Residue Asn-144 is glycosylated (N-linked (GlcNAc...) asparagine). Position 151 (Glu-151) interacts with CDP-choline. Asp-154 contributes to the Mg(2+) binding site. Catalysis depends on His-155, which acts as the Proton acceptor. The next 8 membrane-spanning stretches (helical) occupy residues 156–176, 180–199, 210–230, 246–267, 286–306, 315–334, 349–363, and 368–388; these read GCDS…VQLG, DWMF…AHWQ, IIDV…AVIG, MKLF…NYFR, VLSP…IYKK, HPCL…TNKL, TAFI…DQYF, and DEYI…IRYC. Asp-158 lines the Mg(2+) pocket.

The protein belongs to the CDP-alcohol phosphatidyltransferase class-I family. As to quaternary structure, homodimer. Mg(2+) is required as a cofactor. Requires Mn(2+) as cofactor.

It localises to the endoplasmic reticulum membrane. It is found in the nucleus membrane. The enzyme catalyses CDP-ethanolamine + a 1,2-diacyl-sn-glycerol = a 1,2-diacyl-sn-glycero-3-phosphoethanolamine + CMP + H(+). It catalyses the reaction CDP-choline + a 1,2-diacyl-sn-glycerol = a 1,2-diacyl-sn-glycero-3-phosphocholine + CMP + H(+). The catalysed reaction is 1-O-alkyl-2-acyl-sn-glycerol + CDP-choline = a 1-O-alkyl-2-acyl-sn-glycero-3-phosphocholine + CMP + H(+). It carries out the reaction a 1-O-(1Z-alkenyl)-2-acyl-sn-glycerol + CDP-choline = a 1-O-(1Z-alkenyl)-2-acyl-sn-glycero-3-phosphocholine + CMP + H(+). The enzyme catalyses 1,2-dioctanoyl-sn-glycerol + CDP-choline = 1,2-dioctanoyl-sn-glycero-3-phosphocholine + CMP + H(+). It catalyses the reaction 1,2-didecanoyl-sn-glycerol + CDP-choline = 1,2-didecanoyl-sn-glycero-3-phosphocholine + CMP + H(+). The catalysed reaction is CDP-choline + 1,2-di-(9Z-octadecenoyl)-sn-glycerol = 1,2-di-(9Z-octadecenoyl)-sn-glycero-3-phosphocholine + CMP + H(+). It carries out the reaction 1-hexadecanoyl-2-(9Z-octadecenoyl)-sn-glycerol + CDP-choline = 1-hexadecanoyl-2-(9Z-octadecenoyl)-sn-glycero-3-phosphocholine + CMP + H(+). The enzyme catalyses CDP-ethanolamine + 1,2-di-(9Z-octadecenoyl)-sn-glycerol = 1,2-di-(9Z-octadecenoyl)-sn-glycero-3-phosphoethanolamine + CMP + H(+). It catalyses the reaction 1-hexadecanoyl-2-(9Z-octadecenoyl)-sn-glycerol + CDP-ethanolamine = 1-hexadecanoyl-2-(9Z-octadecenoyl)-sn-glycero-3-phosphoethanolamine + CMP + H(+). The catalysed reaction is 1-hexadecanoyl-2-(4Z,7Z,10Z,13Z,16Z,19Z-docosahexaenoyl)-sn-glycerol + CDP-choline = 1-hexadecanoyl-2-(4Z,7Z,10Z,13Z,16Z,19Z-docosahexaenoyl)-sn-glycero-3-phosphocholine + CMP + H(+). It carries out the reaction 1,2-di-(9Z-hexadecenoyl)-sn-glycerol + CDP-choline = 1,2-di-(9Z-hexadecenoyl)-sn-glycero-3-phosphocholine + CMP + H(+). The enzyme catalyses 1,2-di-(9Z-hexadecenoyl)-sn-glycerol + CDP-ethanolamine = 1,2-di-(9Z-hexadecenoyl)-sn-glycero-3-phosphoethanolamine + CMP + H(+). It catalyses the reaction 1-O-hexadecyl-2-acetyl-sn-glycerol + CDP-choline = 1-O-hexadecyl-2-acetyl-sn-glycero-3-phosphocholine + CMP + H(+). The catalysed reaction is 1-O-hexadecyl-2-(5Z,8Z,11Z,14Z-eicosatetraenoyl)-sn-glycerol + CDP-choline = 1-O-hexadecyl-2-(5Z,8Z,11Z,14Z)-eicosatetraenoyl-sn-glycero-3-phosphocholine + CMP + H(+). It functions in the pathway phospholipid metabolism; phosphatidylethanolamine biosynthesis; phosphatidylethanolamine from ethanolamine: step 3/3. It participates in phospholipid metabolism; phosphatidylcholine biosynthesis; phosphatidylcholine from phosphocholine: step 2/2. Catalyzes both phosphatidylcholine and phosphatidylethanolamine biosynthesis from CDP-choline and CDP-ethanolamine, respectively. Involved in protein-dependent process of phospholipid transport to distribute phosphatidyl choline to the lumenal surface. Has a higher cholinephosphotransferase activity than ethanolaminephosphotransferase activity. This chain is Choline/ethanolaminephosphotransferase 1, found in Rattus norvegicus (Rat).